Reading from the N-terminus, the 30-residue chain is Cytochrome b6/f complex 12.6 kDa peptide (30 aa).

The tract at residues 1 to 30 (SGSGVRSAKKGGKAQGGQAGVGYKGSTEPG) is disordered. Residues 13–23 (KAQGGQAGVGY) are compositionally biased toward gly residues.

The protein resides in the plastid. It localises to the chloroplast. Functionally, may be a component of the cytochrome b6/f complex which is part of the photosynthetic respiratory chain. The chain is Cytochrome b6/f complex 12.6 kDa peptide from Euglena gracilis.